The chain runs to 443 residues: Proline--tRNA ligase (443 aa).

This sequence belongs to the class-II aminoacyl-tRNA synthetase family. ProS type 2 subfamily. In terms of assembly, homodimer.

Its subcellular location is the cytoplasm. The catalysed reaction is tRNA(Pro) + L-proline + ATP = L-prolyl-tRNA(Pro) + AMP + diphosphate. In terms of biological role, catalyzes the attachment of proline to tRNA(Pro) in a two-step reaction: proline is first activated by ATP to form Pro-AMP and then transferred to the acceptor end of tRNA(Pro). This is Proline--tRNA ligase from Zymomonas mobilis subsp. mobilis (strain ATCC 10988 / DSM 424 / LMG 404 / NCIMB 8938 / NRRL B-806 / ZM1).